The following is a 241-amino-acid chain: Ribosomal RNA small subunit methyltransferase G (241 aa).

S-adenosyl-L-methionine is bound by residues G79, F84, 130–131, and R150; that span reads AE.

The protein belongs to the methyltransferase superfamily. RNA methyltransferase RsmG family.

The protein localises to the cytoplasm. Its function is as follows. Specifically methylates the N7 position of a guanine in 16S rRNA. This is Ribosomal RNA small subunit methyltransferase G from Limosilactobacillus reuteri (strain DSM 20016) (Lactobacillus reuteri).